We begin with the raw amino-acid sequence, 235 residues long: Futalosine hydrolase (235 aa).

It belongs to the PNP/UDP phosphorylase family. Futalosine hydrolase subfamily.

The enzyme catalyses futalosine + H2O = dehypoxanthine futalosine + hypoxanthine. Its pathway is quinol/quinone metabolism; menaquinone biosynthesis. Catalyzes the hydrolysis of futalosine (FL) to dehypoxanthine futalosine (DHFL) and hypoxanthine, a step in the biosynthesis of menaquinone (MK, vitamin K2). Does not accept aminodeoxyfutalosine (AFL) as a substrate. The protein is Futalosine hydrolase of Streptomyces coelicolor (strain ATCC BAA-471 / A3(2) / M145).